Here is a 344-residue protein sequence, read N- to C-terminus: Methionine import ATP-binding protein MetN (344 aa).

The 239-residue stretch at 7-245 folds into the ABC transporter domain; the sequence is ISLKKISRCF…PQDDTTIAML (239 aa). Residue 42 to 49 participates in ATP binding; that stretch reads GRSGAGKS.

Belongs to the ABC transporter superfamily. Methionine importer (TC 3.A.1.24) family. In terms of assembly, the complex is composed of two ATP-binding proteins (MetN), two transmembrane proteins (MetI) and a solute-binding protein (MetQ).

It is found in the cell inner membrane. The catalysed reaction is L-methionine(out) + ATP + H2O = L-methionine(in) + ADP + phosphate + H(+). The enzyme catalyses D-methionine(out) + ATP + H2O = D-methionine(in) + ADP + phosphate + H(+). Part of the ABC transporter complex MetNIQ involved in methionine import. Responsible for energy coupling to the transport system. The chain is Methionine import ATP-binding protein MetN from Bartonella henselae (strain ATCC 49882 / DSM 28221 / CCUG 30454 / Houston 1) (Rochalimaea henselae).